Reading from the N-terminus, the 65-residue chain is Large ribosomal subunit protein bL31 (65 aa).

Positions 16, 18, 36, and 39 each coordinate Zn(2+).

Belongs to the bacterial ribosomal protein bL31 family. Type A subfamily. Part of the 50S ribosomal subunit. Zn(2+) serves as cofactor.

Its function is as follows. Binds the 23S rRNA. The polypeptide is Large ribosomal subunit protein bL31 (Carboxydothermus hydrogenoformans (strain ATCC BAA-161 / DSM 6008 / Z-2901)).